Here is a 72-residue protein sequence, read N- to C-terminus: Translation initiation factor IF-1 (72 aa).

Residues 1-72 form the S1-like domain; that stretch reads MAKDDVIVVD…DKGRITHRYK (72 aa).

It belongs to the IF-1 family. Component of the 30S ribosomal translation pre-initiation complex which assembles on the 30S ribosome in the order IF-2 and IF-3, IF-1 and N-formylmethionyl-tRNA(fMet); mRNA recruitment can occur at any time during PIC assembly.

The protein localises to the cytoplasm. Its function is as follows. One of the essential components for the initiation of protein synthesis. Stabilizes the binding of IF-2 and IF-3 on the 30S subunit to which N-formylmethionyl-tRNA(fMet) subsequently binds. Helps modulate mRNA selection, yielding the 30S pre-initiation complex (PIC). Upon addition of the 50S ribosomal subunit IF-1, IF-2 and IF-3 are released leaving the mature 70S translation initiation complex. In Aliarcobacter butzleri (strain RM4018) (Arcobacter butzleri), this protein is Translation initiation factor IF-1.